The sequence spans 639 residues: Chaperone protein DnaK (639 aa).

Phosphothreonine; by autocatalysis is present on Thr-198. The interval 601–639 (AQQAPGADSCGGDCGQQQEAGAKPKDEKVVDADFEEVKK) is disordered. Residues 622 to 639 (AKPKDEKVVDADFEEVKK) are compositionally biased toward basic and acidic residues.

This sequence belongs to the heat shock protein 70 family.

In terms of biological role, acts as a chaperone. The protein is Chaperone protein DnaK of Trichlorobacter lovleyi (strain ATCC BAA-1151 / DSM 17278 / SZ) (Geobacter lovleyi).